Consider the following 122-residue polypeptide: Large ribosomal subunit protein uL14 (122 aa).

The protein belongs to the universal ribosomal protein uL14 family. Part of the 50S ribosomal subunit. Forms a cluster with proteins L3 and L19. In the 70S ribosome, L14 and L19 interact and together make contacts with the 16S rRNA in bridges B5 and B8.

In terms of biological role, binds to 23S rRNA. Forms part of two intersubunit bridges in the 70S ribosome. In Acinetobacter baumannii (strain AB307-0294), this protein is Large ribosomal subunit protein uL14.